The primary structure comprises 198 residues: Recombination protein RecR (198 aa).

Residues 56–71 (CGVCGNVDTSNPCGIC) form a C4-type zinc finger. Residues 79–174 (RSICVVEEVA…RVTQLAHGLP (96 aa)) enclose the Toprim domain.

This sequence belongs to the RecR family.

Its function is as follows. May play a role in DNA repair. It seems to be involved in an RecBC-independent recombinational process of DNA repair. It may act with RecF and RecO. The sequence is that of Recombination protein RecR from Novosphingobium aromaticivorans (strain ATCC 700278 / DSM 12444 / CCUG 56034 / CIP 105152 / NBRC 16084 / F199).